A 266-amino-acid polypeptide reads, in one-letter code: Hydroxyethylthiazole kinase (266 aa).

Position 43 (M43) interacts with substrate. ATP contacts are provided by R119 and T166. A substrate-binding site is contributed by G193.

This sequence belongs to the Thz kinase family. Mg(2+) serves as cofactor.

It carries out the reaction 5-(2-hydroxyethyl)-4-methylthiazole + ATP = 4-methyl-5-(2-phosphooxyethyl)-thiazole + ADP + H(+). Its pathway is cofactor biosynthesis; thiamine diphosphate biosynthesis; 4-methyl-5-(2-phosphoethyl)-thiazole from 5-(2-hydroxyethyl)-4-methylthiazole: step 1/1. Its function is as follows. Catalyzes the phosphorylation of the hydroxyl group of 4-methyl-5-beta-hydroxyethylthiazole (THZ). The protein is Hydroxyethylthiazole kinase of Methanococcus maripaludis (strain C6 / ATCC BAA-1332).